Reading from the N-terminus, the 268-residue chain is Undecaprenyl-diphosphatase (268 aa).

A run of 7 helical transmembrane segments spans residues 5-25 (SIIS…IPVS), 43-63 (GNTF…LVYF), 84-104 (FSVL…HGFI), 106-126 (AVLF…GVIL), 184-204 (AAEF…TLDL), 213-233 (FDDI…GIVV), and 248-268 (PFAI…WLVG).

It belongs to the UppP family.

It is found in the cell inner membrane. The enzyme catalyses di-trans,octa-cis-undecaprenyl diphosphate + H2O = di-trans,octa-cis-undecaprenyl phosphate + phosphate + H(+). Its function is as follows. Catalyzes the dephosphorylation of undecaprenyl diphosphate (UPP). Confers resistance to bacitracin. The protein is Undecaprenyl-diphosphatase of Sinorhizobium fredii (strain NBRC 101917 / NGR234).